The sequence spans 263 residues: Acetyl-coenzyme A carboxylase carboxyl transferase subunit beta (263 aa).

A CoA carboxyltransferase N-terminal domain is found at 1-263 (MDCPSCKVSY…LKETPKKKKA (263 aa)). Positions 3, 6, 22, and 25 each coordinate Zn(2+). The C4-type zinc finger occupies 3–25 (CPSCKVSYDEEVFTDNLMVCPHC).

It belongs to the AccD/PCCB family. In terms of assembly, acetyl-CoA carboxylase is a heterohexamer composed of biotin carboxyl carrier protein (AccB), biotin carboxylase (AccC) and two subunits each of ACCase subunit alpha (AccA) and ACCase subunit beta (AccD). Zn(2+) is required as a cofactor.

It localises to the cytoplasm. The enzyme catalyses N(6)-carboxybiotinyl-L-lysyl-[protein] + acetyl-CoA = N(6)-biotinyl-L-lysyl-[protein] + malonyl-CoA. The protein operates within lipid metabolism; malonyl-CoA biosynthesis; malonyl-CoA from acetyl-CoA: step 1/1. Component of the acetyl coenzyme A carboxylase (ACC) complex. Biotin carboxylase (BC) catalyzes the carboxylation of biotin on its carrier protein (BCCP) and then the CO(2) group is transferred by the transcarboxylase to acetyl-CoA to form malonyl-CoA. This chain is Acetyl-coenzyme A carboxylase carboxyl transferase subunit beta, found in Treponema denticola (strain ATCC 35405 / DSM 14222 / CIP 103919 / JCM 8153 / KCTC 15104).